The sequence spans 108 residues: Evasin P1229 (108 aa).

A signal peptide spans 1 to 31 (MEVRTFAFLQIVVFVALGIQLFAAVTDAADA). Disulfide bonds link Cys41-Cys63, Cys45-Cys65, and Cys56-Cys76. The N-linked (GlcNAc...) asparagine glycan is linked to Asn44. A disordered region spans residues 88-108 (GDPNNSDLDAATPRHPDASSR). A glycan (N-linked (GlcNAc...) asparagine) is linked at Asn91. The segment covering 99–108 (TPRHPDASSR) has biased composition (basic and acidic residues).

Its subcellular location is the secreted. Functionally, salivary chemokine-binding protein which binds to host chemokines CXCL1 and CXCL8. The polypeptide is Evasin P1229 (Ixodes ricinus (Common tick)).